The chain runs to 352 residues: Inorganic triphosphatase (352 aa).

The region spanning L6–Q203 is the CYTH domain.

It carries out the reaction triphosphate + H2O = phosphate + diphosphate. In terms of biological role, involved in the hydrolysis of the beta-gamma-phosphoanhydride linkage of triphosphate-containing substrates (inorganic or nucleoside-linked). Catalyzes the hydrolysis of inorganic triphosphate (PPPi), which could be cytotoxic because of its high affinity for calcium ion, thereby interfering with calcium signaling. This Haemophilus influenzae (strain ATCC 51907 / DSM 11121 / KW20 / Rd) protein is Inorganic triphosphatase.